Consider the following 377-residue polypeptide: Chaperone protein DnaJ (377 aa).

Positions 5-70 (DYYQILGIPK…EKRSAYDQYG (66 aa)) constitute a J domain. The segment at 132-210 (GIKKEIQIPT…CHGQGRVETY (79 aa)) adopts a CR-type zinc-finger fold. Zn(2+) is bound by residues cysteine 145, cysteine 148, cysteine 162, cysteine 165, cysteine 184, cysteine 187, cysteine 198, and cysteine 201. CXXCXGXG motif repeat units lie at residues 145–152 (CKTCYGSG), 162–169 (CSTCHGKG), 184–191 (CPTCHGKG), and 198–205 (CNLCHGQG).

This sequence belongs to the DnaJ family. As to quaternary structure, homodimer. The cofactor is Zn(2+).

The protein resides in the cytoplasm. Its function is as follows. Participates actively in the response to hyperosmotic and heat shock by preventing the aggregation of stress-denatured proteins and by disaggregating proteins, also in an autonomous, DnaK-independent fashion. Unfolded proteins bind initially to DnaJ; upon interaction with the DnaJ-bound protein, DnaK hydrolyzes its bound ATP, resulting in the formation of a stable complex. GrpE releases ADP from DnaK; ATP binding to DnaK triggers the release of the substrate protein, thus completing the reaction cycle. Several rounds of ATP-dependent interactions between DnaJ, DnaK and GrpE are required for fully efficient folding. Also involved, together with DnaK and GrpE, in the DNA replication of plasmids through activation of initiation proteins. This chain is Chaperone protein DnaJ, found in Buchnera aphidicola subsp. Acyrthosiphon pisum (strain 5A).